The sequence spans 1337 residues: C-Jun-amino-terminal kinase-interacting protein 3 (1337 aa).

The RH1 domain maps to 12-100; the sequence is VVVYQDDYCS…LTQYEREKAL (89 aa). The segment at 50–80 is kinesin-binding domain (KBD); essential for its function in axon elongation; it reads EVVKELMPLVVNVLENLDSVLSENQEHEVEL. The stretch at 58-177 forms a coiled coil; it reads LVVNVLENLD…HTEMIQTYVE (120 aa). 2 disordered regions span residues 183-211 and 245-285; these read KMQQ…SLNV and SSSY…PSAA. A compositionally biased stretch (polar residues) spans 184–198; sequence MQQVGGSGQTESSLP. Residues 210–226 are JNK-binding domain (JBD); essential for its function in axon elongation; it reads NVFPLADGMVRAQMGGK. The segment covering 261-270 has biased composition (low complexity); it reads SSAAATPSTT. T266, T276, and T287 each carry phosphothreonine; by MAPK. Polar residues predominate over residues 271 to 282; sequence GTKSNTPTSSVP. A phosphoserine; by ROCK1 mark is found at S315 and S365. S366 carries the post-translational modification Phosphoserine. The tract at residues 424-459 is leucine zipper-like domain (LZ); essential for its function in axon elongation; sequence LLLENSQLLETKNALNVVKNDLIAKVDQLSGEQEVL. Positions 437 to 555 form a coiled coil; it reads ALNVVKNDLI…LQEAVRWTEM (119 aa). Residues 459–515 are interaction with NTRK2; the sequence is LKGELEAAKQAKVKLENRIKELEEELKRVKSEAVTARREPREEVEDVSSYLCTELDK. Residues 521–595 form the RH2 domain; that stretch reads RRRFTRVEMA…SPPPAKRSYP (75 aa). Position 603 is a phosphoserine (S603). Residues 633–655 are disordered; the sequence is DDCTSSARREQKREQYRQVREHV. The segment covering 639–655 has biased composition (basic and acidic residues); sequence ARREQKREQYRQVREHV. S677 is subject to Phosphoserine. Disordered regions lie at residues 719–772 and 859–966; these read WKPH…ATSS and PRSN…TTTS. Residues 739 to 765 show a composition bias toward basic and acidic residues; it reads LTCDREGEGEPKSTHPSPEKKKAKETP. Polar residues-rich tracts occupy residues 879–892 and 941–952; these read VATT…PSQS and ENGSESNGTIVQ.

This sequence belongs to the JIP scaffold family. In terms of assembly, forms homo- or heterooligomeric complexes. The central region of MAPK8IP3 interacts with the C-terminal of MAPK8IP2 but not MAPK8IP1. Binds specific components of the JNK signaling pathway namely MAPK8/JNK1, MAPK9/JNK2 and MAPK10/JNK3 to the N-terminal region, MAP2K4/MKK4 and MAP2K7/MKK7 to the central region and MAP3K11 to the C-terminal region. Binds the TPR motif-containing C-terminal of kinesin light chain, KLC1. Pre-assembled MAPK8IP1 scaffolding complexes are then transported as a cargo of kinesin, to the required subcellular location. Interacts with ROCK1 and this interaction is enhanced by ultraviolet-B (UVB) radiation. Interacts with SH3RF2. Interacts with NTRK2/TRKB and NTRK3/TRKC. Phosphorylation by ROCK1 is crucial for the recruitment of JNK. As to expression, highly expressed throughout many regions of the brain and at lower levels in the heart, liver, lung, testes and kidney. All isoforms have been identified in the brain, isoform 1a is also expressed in the spleen and lung.

It is found in the cytoplasm. Its subcellular location is the golgi apparatus. The protein localises to the cytoplasmic vesicle. It localises to the cell projection. The protein resides in the growth cone. It is found in the axon. Its subcellular location is the dendrite. The protein localises to the perinuclear region. Functionally, the JNK-interacting protein (JIP) group of scaffold proteins selectively mediates JNK signaling by aggregating specific components of the MAPK cascade to form a functional JNK signaling module. May function as a regulator of vesicle transport, through interactions with the JNK-signaling components and motor proteins. Promotes neuronal axon elongation in a kinesin- and JNK-dependent manner. Activates cofilin at axon tips via local activation of JNK, thereby regulating filopodial dynamics and enhancing axon elongation. Its binding to kinesin heavy chains (KHC), promotes kinesin-1 motility along microtubules and is essential for axon elongation and regeneration. Regulates cortical neuronal migration by mediating NTRK2/TRKB anterograde axonal transport during brain development. Acts as an adapter that bridges the interaction between NTRK2/TRKB and KLC1 and drives NTRK2/TRKB axonal but not dendritic anterograde transport, which is essential for subsequent BDNF-triggered signaling and filopodia formation. This is C-Jun-amino-terminal kinase-interacting protein 3 (Mapk8ip3) from Mus musculus (Mouse).